We begin with the raw amino-acid sequence, 70 residues long: Small ribosomal subunit protein bS21C (70 aa).

The protein belongs to the bacterial ribosomal protein bS21 family.

The polypeptide is Small ribosomal subunit protein bS21C (Burkholderia pseudomallei (strain 1710b)).